Reading from the N-terminus, the 406-residue chain is 2,3-bisphosphoglycerate-independent phosphoglycerate mutase (406 aa).

Positions 156 to 165 are enriched in basic and acidic residues; the sequence is ITEGDPHKEG. The tract at residues 156-177 is disordered; the sequence is ITEGDPHKEGVPIPEVKPLDNS.

Belongs to the BPG-independent phosphoglycerate mutase family. A-PGAM subfamily.

The enzyme catalyses (2R)-2-phosphoglycerate = (2R)-3-phosphoglycerate. Its pathway is carbohydrate degradation; glycolysis; pyruvate from D-glyceraldehyde 3-phosphate: step 3/5. Catalyzes the interconversion of 2-phosphoglycerate and 3-phosphoglycerate. The polypeptide is 2,3-bisphosphoglycerate-independent phosphoglycerate mutase (Methanococcus aeolicus (strain ATCC BAA-1280 / DSM 17508 / OCM 812 / Nankai-3)).